A 102-amino-acid chain; its full sequence is Large ribosomal subunit protein bL21 (102 aa).

This sequence belongs to the bacterial ribosomal protein bL21 family. Part of the 50S ribosomal subunit. Contacts protein L20.

Functionally, this protein binds to 23S rRNA in the presence of protein L20. The polypeptide is Large ribosomal subunit protein bL21 (Listeria monocytogenes serotype 4b (strain CLIP80459)).